Here is a 545-residue protein sequence, read N- to C-terminus: Chaperonin GroEL (545 aa).

ATP-binding positions include 29–32, Lys50, 86–90, Gly413, and Asp495; these read TLGP and DGTTT.

It belongs to the chaperonin (HSP60) family. In terms of assembly, forms a cylinder of 14 subunits composed of two heptameric rings stacked back-to-back. Interacts with the co-chaperonin GroES.

Its subcellular location is the cytoplasm. The enzyme catalyses ATP + H2O + a folded polypeptide = ADP + phosphate + an unfolded polypeptide.. Functionally, together with its co-chaperonin GroES, plays an essential role in assisting protein folding. The GroEL-GroES system forms a nano-cage that allows encapsulation of the non-native substrate proteins and provides a physical environment optimized to promote and accelerate protein folding. This Borreliella afzelii (strain PKo) (Borrelia afzelii) protein is Chaperonin GroEL.